We begin with the raw amino-acid sequence, 873 residues long: Valine--tRNA ligase (873 aa).

The short motif at 46 to 56 (PNVTGKLHIGH) is the 'HIGH' region element. The 'KMSKS' region motif lies at 525 to 529 (KMSKS). Position 528 (Lys528) interacts with ATP. Residues 804–873 (NDDFIDKEKM…ELIQDKLNKM (70 aa)) are a coiled coil.

It belongs to the class-I aminoacyl-tRNA synthetase family. ValS type 1 subfamily. Monomer.

It is found in the cytoplasm. It catalyses the reaction tRNA(Val) + L-valine + ATP = L-valyl-tRNA(Val) + AMP + diphosphate. Catalyzes the attachment of valine to tRNA(Val). As ValRS can inadvertently accommodate and process structurally similar amino acids such as threonine, to avoid such errors, it has a 'posttransfer' editing activity that hydrolyzes mischarged Thr-tRNA(Val) in a tRNA-dependent manner. The polypeptide is Valine--tRNA ligase (Mesoplasma florum (strain ATCC 33453 / NBRC 100688 / NCTC 11704 / L1) (Acholeplasma florum)).